A 144-amino-acid polypeptide reads, in one-letter code: Large ribosomal subunit protein uL16 (144 aa).

The protein belongs to the universal ribosomal protein uL16 family. As to quaternary structure, part of the 50S ribosomal subunit.

Its function is as follows. Binds 23S rRNA and is also seen to make contacts with the A and possibly P site tRNAs. This Pediococcus pentosaceus (strain ATCC 25745 / CCUG 21536 / LMG 10740 / 183-1w) protein is Large ribosomal subunit protein uL16.